A 707-amino-acid polypeptide reads, in one-letter code: DNA-binding protein RFX2 (707 aa).

Phosphoserine is present on Ser33. Positions 204 to 279 (HLQWLLDNYE…YHYYGIRLKP (76 aa)) form a DNA-binding region, RFX-type winged-helix. Residues 297–337 (QQPVHQKPRYRPAQKTDSLGESGSHSSLHSTPEQAMAAQSQ) are disordered. Residues 315 to 337 (LGESGSHSSLHSTPEQAMAAQSQ) are compositionally biased toward low complexity. Position 420 is a phosphoserine (Ser420).

The protein belongs to the RFX family. As to quaternary structure, homodimer; probably only forms homodimers in testis. Heterodimer; heterodimerizes with RFX1 and RFX3.

Its subcellular location is the nucleus. The protein localises to the cytoplasm. Its function is as follows. Transcription factor that acts as a key regulator of spermatogenesis. Acts by regulating expression of genes required for the haploid phase during spermiogenesis, such as genes required for cilium assembly and function. Recognizes and binds the X-box, a regulatory motif with DNA sequence 5'-GTNRCC(0-3N)RGYAAC-3' present on promoters. Probably activates transcription of the testis-specific histone gene H1-6. This chain is DNA-binding protein RFX2 (RFX2), found in Bos taurus (Bovine).